The following is an 858-amino-acid chain: Cone cGMP-specific 3',5'-cyclic phosphodiesterase subunit alpha' (858 aa).

2 GAF domains span residues 75–224 (TPEQ…SIIL) and 256–433 (DVER…GWSL). 3',5'-cyclic GMP is bound by residues Ser-97, Asp-116, 169-172 (DKQT), and Thr-176. The region spanning 486-819 (EEKQLVAILK…VEWKSLADEY (334 aa)) is the PDEase domain. The active-site Proton donor is His-562. A divalent metal cation-binding residues include His-566, His-602, Asp-603, and Asp-723. Positions 830 to 852 (AKKQEGGAEKAAEDSGGGDDKKS) are enriched in basic and acidic residues. The segment at 830-858 (AKKQEGGAEKAAEDSGGGDDKKSKTCLML) is disordered. Residue Cys-855 is modified to Cysteine methyl ester. Residue Cys-855 is the site of S-geranylgeranyl cysteine attachment. The propeptide at 856 to 858 (LML) is removed in mature form.

It belongs to the cyclic nucleotide phosphodiesterase family. Composed of two alpha' subunits that are associated with 3 smaller proteins of 11, 13, and 15 kDa. A divalent metal cation serves as cofactor.

The protein resides in the cell membrane. The enzyme catalyses 3',5'-cyclic GMP + H2O = GMP + H(+). Its function is as follows. As cone-specific cGMP phosphodiesterase, it plays an essential role in light detection and cone phototransduction by rapidly decreasing intracellular levels of cGMP. The sequence is that of Cone cGMP-specific 3',5'-cyclic phosphodiesterase subunit alpha' (PDE6C) from Homo sapiens (Human).